Reading from the N-terminus, the 192-residue chain is uncharacterized protein (192 aa).

Residues 29-160 enclose the Nudix hydrolase domain; it reads HRQAAVLIPI…PLDIYRRGDS (132 aa). The Nudix box motif lies at 67 to 89; it reads GAVDDTDTSVIAAALREAEEEVA. Positions 83 and 87 each coordinate Mg(2+).

Belongs to the Nudix hydrolase family. PCD1 subfamily. Mn(2+) is required as a cofactor. It depends on Mg(2+) as a cofactor.

In terms of biological role, probably mediates the hydrolysis of some nucleoside diphosphate derivatives. This is an uncharacterized protein from Escherichia coli O6:H1 (strain CFT073 / ATCC 700928 / UPEC).